Consider the following 456-residue polypeptide: Protein king tubby (456 aa).

Residues 111–202 are disordered; the sequence is HELEDEESSP…SNGAGGESEG (92 aa). Positions 120–152 are enriched in polar residues; the sequence is PVTVIEQQQTAPHSANSTHSQRPSTTRQPSFND. The residue at position 149 (S149) is a Phosphoserine.

This sequence belongs to the TUB family.

It is found in the cytoplasm. The protein localises to the nucleus. The protein resides in the cell projection. Its subcellular location is the cilium membrane. It localises to the rhabdomere. The chain is Protein king tubby from Drosophila pseudoobscura pseudoobscura (Fruit fly).